The chain runs to 408 residues: FAD-dependent monooxygenase nscC (408 aa).

The first 20 residues, 1 to 20 (MAPPLPILIIGAGISGLTTA), serve as a signal peptide directing secretion. FAD is bound by residues E34 and A45. Residues N91 and N103 are each glycosylated (N-linked (GlcNAc...) asparagine). Residue R119 participates in FAD binding. 2 N-linked (GlcNAc...) asparagine glycosylation sites follow: N170 and N231. D328 and G341 together coordinate FAD.

It belongs to the paxM FAD-dependent monooxygenase family. FAD is required as a cofactor.

It participates in secondary metabolite biosynthesis. FAD-dependent monooxygenase; part of the gene cluster that mediates the biosynthesis of neosartoricin, a prenylated anthracenone that exhibits T-cell antiproliferative activity, suggestive of a physiological role as an immunosuppressive agent. The non-reducing polyketide synthase nscA probably synthesizes and cyclizes the decaketide backbone. The hydrolase nscB then mediates the product release through hydrolysis followed by spontaneous decarboxylation. The prenyltransferase nscD catalyzes the addition of the dimethylallyl group to the aromatic C5. The FAD-dependent monooxygenase nscC is then responsible for the stereospecific hydroxylation at C2. There is no gene encoding O-acetyltransferase in the nsc gene cluster; thus, the last step of 2-O-acetylation leading to neosartoricin may be catalyzed by an unidentified O-acetyltransferase. This is FAD-dependent monooxygenase nscC from Neosartorya fischeri (strain ATCC 1020 / DSM 3700 / CBS 544.65 / FGSC A1164 / JCM 1740 / NRRL 181 / WB 181) (Aspergillus fischerianus).